A 131-amino-acid chain; its full sequence is Histone H2A.2 (131 aa).

An N-acetylserine modification is found at Ser2. Residues Lys5 and Lys8 each carry the N6-acetyllysine modification. Gln106 is modified (N5-methylglutamine). Phosphoserine is present on Ser128. The [ST]-Q motif motif lies at 128-129 (SQ).

This sequence belongs to the histone H2A family. In terms of assembly, the nucleosome is a histone octamer containing two molecules each of H2A, H2B, H3 and H4 assembled in one H3-H4 heterotetramer and two H2A-H2B heterodimers. The octamer wraps approximately 147 bp of DNA. Phosphorylated to form H2AS128ph (gamma-H2A) in response to DNA double-strand breaks (DSBs) generated by exogenous genotoxic agents and by stalled replication forks. Phosphorylation is dependent on the DNA damage checkpoint kinases MEC1/ATR and TEL1/ATM, spreads on either side of a detected DSB site and may mark the surrounding chromatin for recruitment of proteins required for DNA damage signaling and repair. Gamma-H2A is removed from the DNA prior to the strand invasion-primer extension step of the repair process and subsequently dephosphorylated by PPH3, a component of the histone H2A phosphatase complex (HTP-C). Dephosphorylation is necessary for efficient recovery from the DNA damage checkpoint. In terms of processing, acetylated by ESA1 to form H2AK4ac and H2AK7ac.

The protein resides in the nucleus. Its subcellular location is the chromosome. In terms of biological role, core component of nucleosome which plays a central role in DNA double strand break (DSB) repair. Nucleosomes wrap and compact DNA into chromatin, limiting DNA accessibility to the cellular machineries which require DNA as a template. Histones thereby play a central role in transcription regulation, DNA repair, DNA replication and chromosomal stability. DNA accessibility is regulated via a complex set of post-translational modifications of histones, also called histone code, and nucleosome remodeling. This chain is Histone H2A.2 (HTA2), found in Candida glabrata (strain ATCC 2001 / BCRC 20586 / JCM 3761 / NBRC 0622 / NRRL Y-65 / CBS 138) (Yeast).